Reading from the N-terminus, the 236-residue chain is Dolichol-phosphate mannosyltransferase (236 aa).

Positions 9, 11, 13, 40, 42, 95, 96, 97, 124, 160, 211, and 217 each coordinate GDP-alpha-D-mannose. Residue aspartate 97 participates in Mg(2+) binding. Aspartate 97 lines the Mn(2+) pocket.

Belongs to the glycosyltransferase 2 family. As to quaternary structure, component of the dolichol-phosphate mannose (DPM) synthase complex composed of dpm1, dpm2 and dpm3. Mg(2+) is required as a cofactor. It depends on Mn(2+) as a cofactor. Requires Ca(2+) as cofactor.

It localises to the endoplasmic reticulum. It catalyses the reaction a di-trans,poly-cis-dolichyl phosphate + GDP-alpha-D-mannose = a di-trans,poly-cis-dolichyl beta-D-mannosyl phosphate + GDP. The protein operates within protein modification; protein glycosylation. In terms of biological role, transfers mannose from GDP-mannose to dolichol monophosphate to form dolichol phosphate mannose (Dol-P-Man) which is the mannosyl donor in pathways leading to N-glycosylation, glycosyl phosphatidylinositol membrane anchoring, and O-mannosylation of proteins. This is Dolichol-phosphate mannosyltransferase from Schizosaccharomyces pombe (strain 972 / ATCC 24843) (Fission yeast).